Consider the following 120-residue polypeptide: Large ribosomal subunit protein uL22 (120 aa).

A disordered region spans residues 1-20; it reads MFVNRRYTARGKNLPSSPKK.

The protein belongs to the universal ribosomal protein uL22 family. In terms of assembly, part of the 50S ribosomal subunit.

This protein binds specifically to 23S rRNA; its binding is stimulated by other ribosomal proteins, e.g. L4, L17, and L20. It is important during the early stages of 50S assembly. It makes multiple contacts with different domains of the 23S rRNA in the assembled 50S subunit and ribosome. Functionally, the globular domain of the protein is located near the polypeptide exit tunnel on the outside of the subunit, while an extended beta-hairpin is found that lines the wall of the exit tunnel in the center of the 70S ribosome. This chain is Large ribosomal subunit protein uL22, found in Borrelia hermsii (strain HS1 / DAH).